The chain runs to 324 residues: UDP-N-acetylenolpyruvoylglucosamine reductase (324 aa).

Residues 36–203 (FRAGGLAELM…THAIFEGYAE (168 aa)) form the FAD-binding PCMH-type domain. Arg-183 is an active-site residue. The Proton donor role is filled by Ser-232. Residue Glu-302 is part of the active site.

This sequence belongs to the MurB family. It depends on FAD as a cofactor.

The protein localises to the cytoplasm. The enzyme catalyses UDP-N-acetyl-alpha-D-muramate + NADP(+) = UDP-N-acetyl-3-O-(1-carboxyvinyl)-alpha-D-glucosamine + NADPH + H(+). The protein operates within cell wall biogenesis; peptidoglycan biosynthesis. Functionally, cell wall formation. This chain is UDP-N-acetylenolpyruvoylglucosamine reductase, found in Rhizobium meliloti (strain 1021) (Ensifer meliloti).